The sequence spans 150 residues: uncharacterized protein (150 aa).

It belongs to the Dps family.

This is an uncharacterized protein from Kitasatospora aureofaciens (Streptomyces aureofaciens).